The chain runs to 955 residues: Leucine--tRNA ligase (955 aa).

The 'HIGH' region motif lies at 66–77; it reads PYPSGSGLHVGH. The short motif at 725 to 729 is the 'KMSKS' region element; it reads KMGKS. Lysine 728 contributes to the ATP binding site.

It belongs to the class-I aminoacyl-tRNA synthetase family.

The protein localises to the cytoplasm. It catalyses the reaction tRNA(Leu) + L-leucine + ATP = L-leucyl-tRNA(Leu) + AMP + diphosphate. The chain is Leucine--tRNA ligase from Saccharopolyspora erythraea (strain ATCC 11635 / DSM 40517 / JCM 4748 / NBRC 13426 / NCIMB 8594 / NRRL 2338).